We begin with the raw amino-acid sequence, 139 residues long: Actin-depolymerizing factor 1 (139 aa).

In terms of domain architecture, ADF-H spans 5 to 139 (SSGLAVNDEC…SLDIVRSRTN (135 aa)).

Belongs to the actin-binding proteins ADF family. Expressed in pollen.

Its function is as follows. Actin-depolymerizing protein. Severs actin filaments (F-actin) and binds to actin monomers. The sequence is that of Actin-depolymerizing factor 1 (ADF1) from Zea mays (Maize).